A 120-amino-acid chain; its full sequence is Large ribosomal subunit protein bL12 (120 aa).

Belongs to the bacterial ribosomal protein bL12 family. Homodimer. Part of the ribosomal stalk of the 50S ribosomal subunit. Forms a multimeric L10(L12)X complex, where L10 forms an elongated spine to which 2 to 4 L12 dimers bind in a sequential fashion. Binds GTP-bound translation factors.

Forms part of the ribosomal stalk which helps the ribosome interact with GTP-bound translation factors. Is thus essential for accurate translation. In Pseudoalteromonas translucida (strain TAC 125), this protein is Large ribosomal subunit protein bL12.